Here is a 326-residue protein sequence, read N- to C-terminus: Polycomb complex protein BMI-1-A (326 aa).

The segment at 18 to 57 (CVLCGGYFIDATTIIECLHSFCKTCIVRYLETSKYCPICD) adopts an RING-type zinc-finger fold. Positions 81 to 95 (KLVPGLFKGEMKRRR) match the Nuclear localization signal motif. 2 disordered regions span residues 239–262 (NPHT…DKAG) and 274–326 (CIPS…ISSG). Low complexity predominate over residues 290 to 303 (ISSTINGTSSSSSS).

In terms of assembly, component of a PRC1-like complex. Interacts with cbx4.

The protein resides in the nucleus. Component of a Polycomb group (PcG) multiprotein PRC1-like complex, a complex class required to maintain the transcriptionally repressive state of many genes, including Hox genes, throughout development. PcG PRC1 complex acts via chromatin remodeling and modification of histones; it mediates monoubiquitination of histone H2A 'Lys-119', rendering chromatin heritably changed in its expressibility. In the PRC1 complex, it is required to stimulate the E3 ubiquitin-protein ligase activity of rnf2. In Xenopus laevis (African clawed frog), this protein is Polycomb complex protein BMI-1-A (bmi1a).